Consider the following 242-residue polypeptide: Phosphatidylethanolamine-binding protein 4 (242 aa).

The signal sequence occupies residues 1–26; it reads MTMKLVAAALCLSLLAAGLWVGLSLT. Residues 31 to 50 form a disordered region; sequence EEGKPGGEKPGGGKPGGSGR. Over residues 38-50 the composition is skewed to gly residues; the sequence is EKPGGGKPGGSGR. N-linked (GlcNAc...) asparagine glycans are attached at residues Asn77 and Asn139. Residues 210-242 are important for secretion; it reads DPDTSTQFMTQFDEELSSEFGRINDDQEQFNQK.

This sequence belongs to the phosphatidylethanolamine-binding protein family.

Its subcellular location is the secreted. Promotes AKT phosphorylation, suggesting a possible role in the PI3K-AKT signaling pathway. This is Phosphatidylethanolamine-binding protein 4 (Pebp4) from Mus musculus (Mouse).